The following is a 258-amino-acid chain: Type III pantothenate kinase (258 aa).

ATP is bound at residue 6–13 (DVGNSDTV). Position 108–111 (108–111 (GSDR)) interacts with substrate. D110 acts as the Proton acceptor in catalysis. D130 provides a ligand contact to K(+). T133 provides a ligand contact to ATP. Substrate is bound at residue T185.

The protein belongs to the type III pantothenate kinase family. In terms of assembly, homodimer. The cofactor is NH4(+). Requires K(+) as cofactor.

It localises to the cytoplasm. The catalysed reaction is (R)-pantothenate + ATP = (R)-4'-phosphopantothenate + ADP + H(+). The protein operates within cofactor biosynthesis; coenzyme A biosynthesis; CoA from (R)-pantothenate: step 1/5. Its function is as follows. Catalyzes the phosphorylation of pantothenate (Pan), the first step in CoA biosynthesis. The chain is Type III pantothenate kinase from Thermobifida fusca (strain YX).